We begin with the raw amino-acid sequence, 198 residues long: Recombination protein RecR (198 aa).

The C4-type zinc finger occupies 58 to 73; that stretch reads CLNCGNVGTSDICDIC. A Toprim domain is found at 81–175; it reads GELCVVEDVA…RLTSLAQGVP (95 aa).

The protein belongs to the RecR family.

Its function is as follows. May play a role in DNA repair. It seems to be involved in an RecBC-independent recombinational process of DNA repair. It may act with RecF and RecO. The protein is Recombination protein RecR of Ruegeria pomeroyi (strain ATCC 700808 / DSM 15171 / DSS-3) (Silicibacter pomeroyi).